A 368-amino-acid polypeptide reads, in one-letter code: L-cysteine desulfhydrase Cds1 (368 aa).

Lysine 67 bears the N6-(pyridoxal phosphate)lysine mark. Pyridoxal 5'-phosphate contacts are provided by residues 203 to 207 (GTGGT) and serine 299.

This sequence belongs to the cysteine synthase/cystathionine beta-synthase family. Cds1 subfamily. Requires pyridoxal 5'-phosphate as cofactor.

The protein localises to the cytoplasm. The catalysed reaction is L-cysteine + H2O = hydrogen sulfide + pyruvate + NH4(+) + H(+). Its function is as follows. A cysteine desulfhydrase that generates hydrogen sulfide, H(2)S. The H(2)S produced by this enzyme stimulates respiration in M.tuberculosis, mediated primarily via cytochrome bd with a lesser contribution from cytochrome bc1/aa3. H(2)S modulates the balance between respiration and glycolysis, and also contributes to redox homeostasis. Probably eliminates toxic levels of Cys (which can induce oxidative stress). In Mycobacterium tuberculosis (strain ATCC 25177 / H37Ra), this protein is L-cysteine desulfhydrase Cds1.